We begin with the raw amino-acid sequence, 357 residues long: 5-hydroxytryptamine receptor 5A (357 aa).

The Extracellular segment spans residues 1 to 36 (MDLPINLTSFSLSTPSTLEPNRSLDTEALRTSQSFL). N-linked (GlcNAc...) asparagine glycosylation is found at asparagine 6 and asparagine 21. A helical membrane pass occupies residues 37 to 63 (SAFRVLVLTLLGFLAAATFTWNLLVLA). Over 64–76 (TILRVRTFHRVPH) the chain is Cytoplasmic. The helical transmembrane segment at 77-103 (NLVASMAISDVLVAVLVMPLSLVHELS) threads the bilayer. Residues 104–114 (GRRWQLGRRLC) lie on the Extracellular side of the membrane. Residues cysteine 114 and cysteine 192 are joined by a disulfide bond. A helical transmembrane segment spans residues 115–137 (QLWIACDVLCCTASIWNVTAIAL). Aspartate 121 contributes to the serotonin binding site. Over 138–155 (DRYWSITRHLEYTLRARK) the chain is Cytoplasmic. The helical transmembrane segment at 156-176 (RVSNVMILLTWALSAVISLAP) threads the bilayer. Topologically, residues 177–198 (LLFGWGETYSELSEECQVSREP) are extracellular. The helical transmembrane segment at 199–220 (SYTVFSTVGAFYLPLCVVLFVY) threads the bilayer. Over 221–287 (WKIYKAAKFR…QKEQRAALMV (67 aa)) the chain is Cytoplasmic. A helical transmembrane segment spans residues 288–312 (GILIGVFVLCWFPFFVTELISPLCS). Topologically, residues 313–314 (WD) are extracellular. The helical transmembrane segment at 315–339 (IPALWKSIFLWLGYSNSFFNPLIYT) threads the bilayer. The Cytoplasmic segment spans residues 340–357 (AFNRSYSSAFKVFFSKQQ).

This sequence belongs to the G-protein coupled receptor 1 family. As to expression, central nervous system.

It localises to the cell membrane. G-protein coupled receptor for 5-hydroxytryptamine (serotonin), a biogenic hormone that functions as a neurotransmitter, a hormone and a mitogen. Also functions as a receptor for ergot alkaloid derivatives and other psychoactive substances. Ligand binding causes a conformation change that triggers signaling via guanine nucleotide-binding proteins (G proteins) and modulates the activity of downstream effectors. Htr5a is coupled to G(i)/G(o) G alpha proteins and mediates inhibitory neurotransmission: signaling inhibits adenylate cyclase activity and activates a phosphatidylinositol-calcium second messenger system that regulates the release of Ca(2+) ions from intracellular stores. This chain is 5-hydroxytryptamine receptor 5A, found in Rattus norvegicus (Rat).